The primary structure comprises 132 residues: Agouti-signaling protein (132 aa).

An N-terminal signal peptide occupies residues 1-22 (MDVTRLLLATLLVFLCFFTAYS). N-linked (GlcNAc...) asparagine glycosylation is present at Asn-39. Residues 61 to 87 (QISRKEAEKKRSSKKEASMKKVARPRT) are disordered. Residues 63–79 (SRKEAEKKRSSKKEASM) are compositionally biased toward basic and acidic residues. Intrachain disulfides connect Cys-93-Cys-108, Cys-100-Cys-114, Cys-107-Cys-125, Cys-111-Cys-132, and Cys-116-Cys-123. The Agouti domain maps to 93–132 (CVATRDSCKPPAPACCDPCASCQCRFFRSACSCRVLSLNC).

The protein resides in the secreted. Involved in the regulation of melanogenesis. The binding of ASP to MC1R precludes alpha-MSH initiated signaling and thus blocks production of cAMP, leading to a down-regulation of eumelanogenesis (brown/black pigment) and thus increasing synthesis of pheomelanin (yellow/red pigment). This Macaca maura (Moor macaque) protein is Agouti-signaling protein (ASIP).